The chain runs to 243 residues: Orotidine 5'-phosphate decarboxylase (243 aa).

Residues D16, K38, 65–74, T120, R181, Q190, G210, and R211 contribute to the substrate site; that span reads DLKLHDIPNT. K67 (proton donor) is an active-site residue.

Belongs to the OMP decarboxylase family. Type 1 subfamily. Homodimer.

It catalyses the reaction orotidine 5'-phosphate + H(+) = UMP + CO2. It functions in the pathway pyrimidine metabolism; UMP biosynthesis via de novo pathway; UMP from orotate: step 2/2. In terms of biological role, catalyzes the decarboxylation of orotidine 5'-monophosphate (OMP) to uridine 5'-monophosphate (UMP). The sequence is that of Orotidine 5'-phosphate decarboxylase from Bradyrhizobium sp. (strain ORS 278).